The primary structure comprises 182 residues: Der GTPase-activating protein YihI (182 aa).

Disordered regions lie at residues Met-1–Ala-79 and Leu-143–Asp-182. The segment covering Thr-23–Arg-32 has biased composition (basic and acidic residues). Residues Leu-33–Ser-47 are compositionally biased toward basic residues.

It belongs to the YihI family. In terms of assembly, interacts with Der.

A GTPase-activating protein (GAP) that modifies Der/EngA GTPase function. May play a role in ribosome biogenesis. The protein is Der GTPase-activating protein YihI of Vibrio cholerae serotype O1 (strain ATCC 39541 / Classical Ogawa 395 / O395).